Here is a 480-residue protein sequence, read N- to C-terminus: Glycogen synthase (480 aa).

Lys-15 is an ADP-alpha-D-glucose binding site.

The protein belongs to the glycosyltransferase 1 family. Bacterial/plant glycogen synthase subfamily.

It catalyses the reaction [(1-&gt;4)-alpha-D-glucosyl](n) + ADP-alpha-D-glucose = [(1-&gt;4)-alpha-D-glucosyl](n+1) + ADP + H(+). Its pathway is glycan biosynthesis; glycogen biosynthesis. Its function is as follows. Synthesizes alpha-1,4-glucan chains using ADP-glucose. The chain is Glycogen synthase from Pasteurella multocida (strain Pm70).